A 451-amino-acid polypeptide reads, in one-letter code: Phosphoglucosamine mutase (451 aa).

Residue serine 101 is the Phosphoserine intermediate of the active site. Positions 101, 243, 245, and 247 each coordinate Mg(2+). Serine 101 is subject to Phosphoserine.

The protein belongs to the phosphohexose mutase family. The cofactor is Mg(2+). Activated by phosphorylation.

The catalysed reaction is alpha-D-glucosamine 1-phosphate = D-glucosamine 6-phosphate. Its function is as follows. Catalyzes the conversion of glucosamine-6-phosphate to glucosamine-1-phosphate. In Thermodesulfovibrio yellowstonii (strain ATCC 51303 / DSM 11347 / YP87), this protein is Phosphoglucosamine mutase.